Here is a 269-residue protein sequence, read N- to C-terminus: uncharacterized protein (269 aa).

Over residues 1-12 (MSKRTNNKKRKH) the composition is skewed to basic residues. Residues 1–82 (MSKRTNNKKR…KKKENGNENV (82 aa)) form a disordered region. The span at 21–33 (PENQDENQDEEFL) shows a compositional bias: acidic residues. Residues 34 to 63 (EDKNKDKNQNKNKDKNKNKDMNKNKNKDMN) are compositionally biased toward basic and acidic residues.

This is an uncharacterized protein from Dictyostelium discoideum (Social amoeba).